The primary structure comprises 319 residues: Acetyl-coenzyme A carboxylase carboxyl transferase subunit alpha (319 aa).

In terms of domain architecture, CoA carboxyltransferase C-terminal spans 35–296; sequence NIDEEVHRLR…KAQLLADLAD (262 aa).

The protein belongs to the AccA family. As to quaternary structure, acetyl-CoA carboxylase is a heterohexamer composed of biotin carboxyl carrier protein (AccB), biotin carboxylase (AccC) and two subunits each of ACCase subunit alpha (AccA) and ACCase subunit beta (AccD).

The protein resides in the cytoplasm. The enzyme catalyses N(6)-carboxybiotinyl-L-lysyl-[protein] + acetyl-CoA = N(6)-biotinyl-L-lysyl-[protein] + malonyl-CoA. Its pathway is lipid metabolism; malonyl-CoA biosynthesis; malonyl-CoA from acetyl-CoA: step 1/1. In terms of biological role, component of the acetyl coenzyme A carboxylase (ACC) complex. First, biotin carboxylase catalyzes the carboxylation of biotin on its carrier protein (BCCP) and then the CO(2) group is transferred by the carboxyltransferase to acetyl-CoA to form malonyl-CoA. The chain is Acetyl-coenzyme A carboxylase carboxyl transferase subunit alpha from Citrobacter koseri (strain ATCC BAA-895 / CDC 4225-83 / SGSC4696).